Consider the following 492-residue polypeptide: 2,3-bisphosphoglycerate-independent phosphoglycerate mutase (492 aa).

Mn(2+)-binding residues include aspartate 11 and serine 61. The active-site Phosphoserine intermediate is serine 61. Substrate is bound by residues histidine 118, 147–148 (RD), arginine 177, arginine 183, 248–251 (RSDR), and lysine 321. 5 residues coordinate Mn(2+): aspartate 387, histidine 391, aspartate 428, histidine 429, and histidine 446.

The protein belongs to the BPG-independent phosphoglycerate mutase family. As to quaternary structure, monomer. It depends on Mn(2+) as a cofactor.

It catalyses the reaction (2R)-2-phosphoglycerate = (2R)-3-phosphoglycerate. It functions in the pathway carbohydrate degradation; glycolysis; pyruvate from D-glyceraldehyde 3-phosphate: step 3/5. Its function is as follows. Catalyzes the interconversion of 2-phosphoglycerate and 3-phosphoglycerate. This Wolinella succinogenes (strain ATCC 29543 / DSM 1740 / CCUG 13145 / JCM 31913 / LMG 7466 / NCTC 11488 / FDC 602W) (Vibrio succinogenes) protein is 2,3-bisphosphoglycerate-independent phosphoglycerate mutase.